The primary structure comprises 651 residues: Acetyl-coenzyme A synthetase (651 aa).

Residues 189–192, Thr311, and Asn335 each bind CoA; that span reads RGGK. ATP-binding positions include 387-389, 411-416, Asp500, and Arg515; these read GEP and DTWWQT. Position 523 (Ser523) interacts with CoA. Arg526 is an ATP binding site. Val537, His539, and Val542 together coordinate Mg(2+). Arg586 contacts CoA. Residue Lys611 is modified to N6-acetyllysine.

This sequence belongs to the ATP-dependent AMP-binding enzyme family. Mg(2+) is required as a cofactor. In terms of processing, acetylated. Deacetylation by the SIR2-homolog deacetylase activates the enzyme.

The catalysed reaction is acetate + ATP + CoA = acetyl-CoA + AMP + diphosphate. In terms of biological role, catalyzes the conversion of acetate into acetyl-CoA (AcCoA), an essential intermediate at the junction of anabolic and catabolic pathways. AcsA undergoes a two-step reaction. In the first half reaction, AcsA combines acetate with ATP to form acetyl-adenylate (AcAMP) intermediate. In the second half reaction, it can then transfer the acetyl group from AcAMP to the sulfhydryl group of CoA, forming the product AcCoA. This Brucella melitensis biotype 2 (strain ATCC 23457) protein is Acetyl-coenzyme A synthetase.